We begin with the raw amino-acid sequence, 157 residues long: Mitochondrial inner membrane protease subunit 1 (157 aa).

Residues S35 and K80 contribute to the active site.

The protein belongs to the peptidase S26 family. IMP1 subfamily. As to quaternary structure, heterodimer of 2 subunits, imp1 and imp2.

It localises to the mitochondrion inner membrane. Functionally, catalyzes the removal of transit peptides required for the targeting of proteins from the mitochondrial matrix, across the inner membrane, into the inter-membrane space. The polypeptide is Mitochondrial inner membrane protease subunit 1 (imp1) (Schizosaccharomyces pombe (strain 972 / ATCC 24843) (Fission yeast)).